We begin with the raw amino-acid sequence, 423 residues long: Phosphoribosylamine--glycine ligase (423 aa).

Residues 107-314 enclose the ATP-grasp domain; it reads KAFMAKYNIP…LSDLVEAAID (208 aa). 133–194 serves as a coordination point for ATP; sequence VNQKGAPIVI…EDFLQGEEAS (62 aa). Residues Glu-284 and Asn-286 each coordinate Mg(2+).

This sequence belongs to the GARS family. Requires Mg(2+) as cofactor. Mn(2+) serves as cofactor.

It catalyses the reaction 5-phospho-beta-D-ribosylamine + glycine + ATP = N(1)-(5-phospho-beta-D-ribosyl)glycinamide + ADP + phosphate + H(+). Its pathway is purine metabolism; IMP biosynthesis via de novo pathway; N(1)-(5-phospho-D-ribosyl)glycinamide from 5-phospho-alpha-D-ribose 1-diphosphate: step 2/2. The protein is Phosphoribosylamine--glycine ligase of Neisseria meningitidis serogroup B (strain ATCC BAA-335 / MC58).